Here is a 127-residue protein sequence, read N- to C-terminus: Large ribosomal subunit protein bL17 (127 aa).

It belongs to the bacterial ribosomal protein bL17 family. Part of the 50S ribosomal subunit. Contacts protein L32.

This is Large ribosomal subunit protein bL17 from Escherichia fergusonii (strain ATCC 35469 / DSM 13698 / CCUG 18766 / IAM 14443 / JCM 21226 / LMG 7866 / NBRC 102419 / NCTC 12128 / CDC 0568-73).